Reading from the N-terminus, the 409-residue chain is MDKLLERFLHYVSLDTQSKSGVRQVPSTEGQWKLLRLLKQQLEEMGLVNITLSEKGTLMATLPANVEGDIPAIGFISHVDTSPDFSGKNVNPQIVENYRGGDIALGIGDEVLSPVMFPVLHQLLGQTLITTDGKTLLGADDKAGVAEIMTALAVLKGNPIPHGEIKVAFTPDEEVGKGAKHFDVEEFGAQWAYTVDGGGVGELEFENFNAASVNIKIVGNNVHPGTAKGVMVNALSLAARIHAEVPADEAPETTEGYEGFYHLASMKGTVDRAEMHYIIRDFDRKQFEARKRKMMEIAKKVGKGLHPDCYIELVIEDSYYNMREKVVEHPHILDIAQQAMRDCHITPEMKPIRGGTDGAQLSFMGLPCPNLFTGGYNYHGKHEFVTLEGMEKAVQVIVRIAELTAKRGQ.

His-78 contacts Zn(2+). Asp-80 is a catalytic residue. Asp-140 lines the Zn(2+) pocket. The active-site Proton acceptor is Glu-173. The Zn(2+) site is built by Glu-174, Asp-196, and His-379.

Belongs to the peptidase M20B family. Zn(2+) serves as cofactor.

It localises to the cytoplasm. The catalysed reaction is Release of the N-terminal residue from a tripeptide.. Its function is as follows. Cleaves the N-terminal amino acid of tripeptides. The polypeptide is Peptidase T (Salmonella paratyphi A (strain ATCC 9150 / SARB42)).